Here is a 350-residue protein sequence, read N- to C-terminus: Methionine import ATP-binding protein MetN (350 aa).

The ABC transporter domain occupies 2-242; the sequence is IELKGISQHF…PRHDVTRALI (241 aa). Position 39 to 46 (39 to 46) interacts with ATP; sequence GRSGAGKS.

The protein belongs to the ABC transporter superfamily. Methionine importer (TC 3.A.1.24) family. In terms of assembly, the complex is composed of two ATP-binding proteins (MetN), two transmembrane proteins (MetI) and a solute-binding protein (MetQ).

The protein localises to the cell inner membrane. It catalyses the reaction L-methionine(out) + ATP + H2O = L-methionine(in) + ADP + phosphate + H(+). The catalysed reaction is D-methionine(out) + ATP + H2O = D-methionine(in) + ADP + phosphate + H(+). Functionally, part of the ABC transporter complex MetNIQ involved in methionine import. Responsible for energy coupling to the transport system. This Ralstonia nicotianae (strain ATCC BAA-1114 / GMI1000) (Ralstonia solanacearum) protein is Methionine import ATP-binding protein MetN.